The sequence spans 344 residues: L-rhamnose-proton symporter (344 aa).

Transmembrane regions (helical) follow at residues 4-24 (AITM…CFYA), 38-58 (WSVG…ALLL), 68-88 (FSLS…IGNI), 101-121 (MGIG…TPII), 137-157 (TLLG…AGQL), 175-195 (LVLA…MNAA), 214-234 (LPSY…FCFI), 259-279 (VLLS…YAWG), 290-310 (ISWM…GLVL), and 323-343 (VLSL…IGMA).

The protein belongs to the L-rhamnose transporter (TC 2.A.7.6) family.

Its subcellular location is the cell inner membrane. It carries out the reaction L-rhamnopyranose(in) + H(+)(in) = L-rhamnopyranose(out) + H(+)(out). In terms of biological role, uptake of L-rhamnose across the cytoplasmic membrane with the concomitant transport of protons into the cell (symport system). The sequence is that of L-rhamnose-proton symporter from Escherichia coli O9:H4 (strain HS).